An 887-amino-acid polypeptide reads, in one-letter code: Bifunctional uridylyltransferase/uridylyl-removing enzyme (887 aa).

The uridylyltransferase stretch occupies residues 1-337 (MINTSPLLNY…RLPNYERKIE (337 aa)). Residues 339–699 (VNDHFKIVDN…AHRKAAQDAV (361 aa)) are uridylyl-removing. The 123-residue stretch at 457 to 579 (VDAHTLLLLR…LGDMEHLDYL (123 aa)) folds into the HD domain. ACT domains lie at 700-782 (QIFI…LMQR) and 809-887 (MVEI…ICQH).

It belongs to the GlnD family. Mg(2+) serves as cofactor.

The catalysed reaction is [protein-PII]-L-tyrosine + UTP = [protein-PII]-uridylyl-L-tyrosine + diphosphate. It catalyses the reaction [protein-PII]-uridylyl-L-tyrosine + H2O = [protein-PII]-L-tyrosine + UMP + H(+). Its activity is regulated as follows. Uridylyltransferase (UTase) activity is inhibited by glutamine, while glutamine activates uridylyl-removing (UR) activity. In terms of biological role, modifies, by uridylylation and deuridylylation, the PII regulatory proteins (GlnB and homologs), in response to the nitrogen status of the cell that GlnD senses through the glutamine level. Under low glutamine levels, catalyzes the conversion of the PII proteins and UTP to PII-UMP and PPi, while under higher glutamine levels, GlnD hydrolyzes PII-UMP to PII and UMP (deuridylylation). Thus, controls uridylylation state and activity of the PII proteins, and plays an important role in the regulation of nitrogen assimilation and metabolism. This is Bifunctional uridylyltransferase/uridylyl-removing enzyme from Acinetobacter baumannii (strain ATCC 17978 / DSM 105126 / CIP 53.77 / LMG 1025 / NCDC KC755 / 5377).